Consider the following 349-residue polypeptide: Divinyl chlorophyll a/b light-harvesting protein PcbE (349 aa).

The next 6 membrane-spanning stretches (helical) occupy residues 27-47 (FIAA…GSTL), 65-85 (IFLA…AWTG), 88-108 (VASI…GGLL), 201-221 (VLGG…FHIA), 241-261 (AILS…AFWC), and 308-328 (LANV…WHAL).

This sequence belongs to the PsbB/PsbC family. IsiA/Pcb subfamily. The antenna complex consists of divinyl chlorophylls (a and b) and divinyl chlorophyll a/b binding proteins and binds more divinyl chlorophyll b than does the antenna complex from high-light-adapted Prochlorococcus. It depends on divinyl chlorophyll a as a cofactor. The cofactor is divinyl chlorophyll b.

Its subcellular location is the cellular thylakoid membrane. The antenna complex functions as a light receptor, it captures and delivers excitation energy to photosystems II and I. The Prochlorales pcb genes are not related to higher plant LHCs. This is Divinyl chlorophyll a/b light-harvesting protein PcbE (pcbE) from Prochlorococcus marinus (strain NATL2A).